Here is a 131-residue protein sequence, read N- to C-terminus: Small ribosomal subunit protein eS8 (131 aa).

The segment at 1 to 37 (MKLGAFYKGGDLKKPSGGKKRRVRRTKKKALGGGPPQ) is disordered. A compositionally biased stretch (basic residues) spans 16–30 (SGGKKRRVRRTKKKA).

This sequence belongs to the eukaryotic ribosomal protein eS8 family. Part of the 30S ribosomal subunit.

In Pyrobaculum neutrophilum (strain DSM 2338 / JCM 9278 / NBRC 100436 / V24Sta) (Thermoproteus neutrophilus), this protein is Small ribosomal subunit protein eS8.